The sequence spans 138 residues: MTLTVRVIAPDKTVWDSPAEEVILPSTTGQLGILSGHAPLLTALETGVMRVRSGKEWLPIALMGGFAEVENNEVTILVNAAERGDRIDRAQAEASYAAAQTKLSQAEQSDSRQAKIQAVQELKRARARVQAAGGVVEI.

This sequence belongs to the ATPase epsilon chain family. As to quaternary structure, F-type ATPases have 2 components, CF(1) - the catalytic core - and CF(0) - the membrane proton channel. CF(1) has five subunits: alpha(3), beta(3), gamma(1), delta(1), epsilon(1). CF(0) has three main subunits: a, b and c.

Its subcellular location is the cellular thylakoid membrane. Its function is as follows. Produces ATP from ADP in the presence of a proton gradient across the membrane. This is ATP synthase epsilon chain from Cyanothece sp. (strain PCC 7425 / ATCC 29141).